A 485-amino-acid polypeptide reads, in one-letter code: MSAEDLEAQEDELLALASIYDADEFRKAESVQGGETRIYLDLPQNFKIFVSGNSNESLQNSGFEYTICFLPPLVLNFELPPDYPSSSPPSFTLSGKWLSPTQLSALCKHLDNLWEEHRGRVVLFAWMQFLKEETLTYLNIVSPFELKMGSQKKVQRRATAQASSSTELGVGGAAAADVDQEETVDERAVQDVESLSSLIQEILDFNQARQTKCFNSKLFLCSICFCEKLGSDCMYFLECKHVYCKACLKDYFEIQIKDGQVKCLNCPEPQCPSVATPGQVKELVEADLFARYDRLLLQSTLDLMADVVYCPRPCCQLPVMQEPGGTMAICSSCNFAFCTLCRLTYHGLSPCKVTAEKLIDLRNEYLQADEATKRFLEQRYGKRVIQKALEEMESKDWLEKNSKSCPCCGTPIQKLDGCNKMTCTGCMQYFCWICMGSLSRANPYRHFTDSESPCFNRLFHAVDINGDMWEDEIEEDDDDEDDDDD.

One can recognise an RWD domain in the interval 11-137 (DELLALASIY…QFLKEETLTY (127 aa)). The D-box signature appears at 37–45 (RIYLDLPQN). Residues 217-458 (KLFLCSICFC…DSESPCFNRL (242 aa)) are TRIAD supradomain. Zn(2+) contacts are provided by Cys221, Cys224, Cys239, His241, Cys244, Cys247, Cys266, Cys271, Cys310, Cys315, Cys330, Cys333, Cys338, Cys341, and His346. The RING-type 1 zinc finger occupies 221-271 (CSICFCEKLGSDCMYFLECKHVYCKACLKDYFEIQIKDGQVKCLNCPEPQC). An IBR-type zinc finger spans residues 290–351 (ARYDRLLLQS…RLTYHGLSPC (62 aa)). A Phosphoserine modification is found at Ser349. Zn(2+) contacts are provided by Cys351, Cys405, and Cys408. Residues 405–434 (CPCCGTPIQKLDGCNKMTCTGCMQYFCWIC) form an RING-type 2; atypical zinc finger. Cys418 is an active-site residue. The Zn(2+) site is built by Cys423, Cys426, Cys431, Cys434, His446, and Cys454.

This sequence belongs to the RBR family. RNF14 subfamily. Interacts with GCN1; interaction takes place in response to ribosome collisions and is required for ubiquitination of EEF1A1/eEF1A. Interacts with the ubiquitin-conjugating enzymes UBE2E1 and UBE2E2. Interacts with AR/androgen receptor. Interacts with TCF7/TCF1, TCF7L1/TCF3 and TCF7L2/TCF4; promoting Wnt signaling. Post-translationally, RING-type zinc finger-dependent and UBE2E2-dependent autoubiquitination.

The protein localises to the cytoplasm. Its subcellular location is the nucleus. The catalysed reaction is [E2 ubiquitin-conjugating enzyme]-S-ubiquitinyl-L-cysteine + [acceptor protein]-L-lysine = [E2 ubiquitin-conjugating enzyme]-L-cysteine + [acceptor protein]-N(6)-ubiquitinyl-L-lysine.. Its pathway is protein modification; protein ubiquitination. Its function is as follows. E3 ubiquitin-protein ligase that plays a key role in the RNF14-RNF25 translation quality control pathway, a pathway that takes place when a ribosome has stalled during translation, and which promotes ubiquitination and degradation of translation factors on stalled ribosomes. Recruited to stalled ribosomes by the ribosome collision sensor GCN1 and mediates 'Lys-6'-linked ubiquitination of target proteins, leading to their degradation. Mediates ubiquitination of EEF1A1/eEF1A and ETF1/eRF1 translation factors on stalled ribosomes, leading to their degradation. Also catalyzes ubiquitination of ribosomal proteins RPL0, RPL1, RPL12, RPS13 and RPS17. Specifically required to resolve RNA-protein cross-links caused by reactive aldehydes, which trigger translation stress by stalling ribosomes: acts by catalying 'Lys-6'-linked ubiquitination of RNA-protein cross-links, leading to their removal by the ATP-dependent unfoldase VCP and subsequent degradation by the proteasome. Independently of its function in the response to stalled ribosomes, acts as a regulator of transcription in Wnt signaling via its interaction with TCF transcription factors (TCF7/TCF1, TCF7L1/TCF3 and TCF7L2/TCF4). May also play a role as a coactivator for androgen- and, to a lesser extent, progesterone-dependent transcription. This chain is E3 ubiquitin-protein ligase RNF14, found in Mus musculus (Mouse).